A 43-amino-acid chain; its full sequence is Hemolysin H1U (43 aa).

At Met1 the chain carries N-formylmethionine.

This sequence belongs to the staphylococcal hemolytic protein family.

It is found in the secreted. Its function is as follows. Virulence factor. Causes hemolysis of erythrocytes. Acts synergistically with beta-hemolysins from S.aureus ATCC 25923. Cytotoxic towards human dermal fibroblasts. This Staphylococcus ureilyticus (Staphylococcus cohnii subsp. urealyticus) protein is Hemolysin H1U.